Reading from the N-terminus, the 215-residue chain is Large ribosomal subunit protein uL3 (215 aa).

An N5-methylglutamine modification is found at Q151.

It belongs to the universal ribosomal protein uL3 family. As to quaternary structure, part of the 50S ribosomal subunit. Forms a cluster with proteins L14 and L19. In terms of processing, methylated by PrmB.

One of the primary rRNA binding proteins, it binds directly near the 3'-end of the 23S rRNA, where it nucleates assembly of the 50S subunit. In Rickettsia bellii (strain OSU 85-389), this protein is Large ribosomal subunit protein uL3.